A 302-amino-acid chain; its full sequence is uncharacterized protein (302 aa).

Disordered stretches follow at residues arginine 15 to lysine 34, glycine 143 to leucine 195, and glycine 221 to valine 246. Positions histidine 172–proline 189 are enriched in basic and acidic residues.

This is an uncharacterized protein from Homo sapiens (Human).